The following is a 320-amino-acid chain: MGSSSKEETASDGDTASGGASPSNDGRLFSEGERVLAYHGPRVYGAKVQKVELRKKEWKYFVHYLGWNKNWDEWVSADRLLKHTEENLVKQKALDKKQGVEKGTKSGRSAQTKTRSSADTKADKDDTKTNAAKGKKRKHESGNEKDNVTAEKLMKIQIPASLKKQLTDDWEYIAQKDKVVKLPRSPNVDEILSKYLEFKTKKDGMVTDSVAEILKGIRSYFDKALPVMLLYKKERRQYQESIVDDTSPSTVYGAEHLLRLFVKLPDLFSYVNMEEETWSRMQQTLSDFLKFIQKNQSTFLLPSAYDSDKVSDGKGKGKDD.

The interval 1–28 (MGSSSKEETASDGDTASGGASPSNDGRL) is disordered. The span at 12-24 (DGDTASGGASPSN) shows a compositional bias: polar residues. A Tudor-knot domain is found at 30-80 (SEGERVLAYHGPRVYGAKVQKVELRKKEWKYFVHYLGWNKNWDEWVSADRL). The segment covering 93–104 (ALDKKQGVEKGT) has biased composition (basic and acidic residues). A disordered region spans residues 93–147 (ALDKKQGVEKGTKSGRSAQTKTRSSADTKADKDDTKTNAAKGKKRKHESGNEKDN). A compositionally biased stretch (polar residues) spans 106–115 (SGRSAQTKTR). Basic and acidic residues predominate over residues 116 to 128 (SSADTKADKDDTK). The MRG domain occupies 150 to 318 (AEKLMKIQIP…KVSDGKGKGK (169 aa)).

In terms of assembly, interacts with HAM1 and HAM2. Interacts (via MRG domain) with CO. Component of the NuA4 histone acetyltransferase complex. Ubiquitous. Mainly expressed in the vasculature of cotyledons and leaves, and in roots and inflorescences.

Its subcellular location is the nucleus. Functionally, chromatin remodeling factor. Acts as a 'reader' protein by binding to H3K36me3 and H3K36me3 to control histone H4 acetylation. Increases the transcriptional levels of the flowering time genes FLC and FT. Binds the chromatin at the FT promoter upon interaction with CO. This is Protein MRG1 from Arabidopsis thaliana (Mouse-ear cress).